A 211-amino-acid chain; its full sequence is Urease accessory protein UreG (211 aa).

11–18 (GPVGAGKT) contributes to the GTP binding site.

It belongs to the SIMIBI class G3E GTPase family. UreG subfamily. Homodimer. UreD, UreF and UreG form a complex that acts as a GTP-hydrolysis-dependent molecular chaperone, activating the urease apoprotein by helping to assemble the nickel containing metallocenter of UreC. The UreE protein probably delivers the nickel.

It is found in the cytoplasm. Its function is as follows. Facilitates the functional incorporation of the urease nickel metallocenter. This process requires GTP hydrolysis, probably effectuated by UreG. In Actinobacillus pleuropneumoniae serotype 7 (strain AP76), this protein is Urease accessory protein UreG.